We begin with the raw amino-acid sequence, 390 residues long: GTPase Obg (390 aa).

The 159-residue stretch at 1 to 159 (MKFVDEAVVK…REIRLELLLL (159 aa)) folds into the Obg domain. Residues 160-333 (ADVGMLGLPN…LCYKLADFME (174 aa)) enclose the OBG-type G domain. GTP contacts are provided by residues 166 to 173 (GLPNAGKS), 191 to 195 (FTTLI), 213 to 216 (DIPG), 283 to 286 (NKVD), and 314 to 316 (SAI). 2 residues coordinate Mg(2+): Ser-173 and Thr-193. The segment covering 367–382 (TEDDDDWDDWDDEEDD) has biased composition (acidic residues). Residues 367-390 (TEDDDDWDDWDDEEDDGHVVYVRD) are disordered.

The protein belongs to the TRAFAC class OBG-HflX-like GTPase superfamily. OBG GTPase family. In terms of assembly, monomer. Mg(2+) is required as a cofactor.

Its subcellular location is the cytoplasm. In terms of biological role, an essential GTPase which binds GTP, GDP and possibly (p)ppGpp with moderate affinity, with high nucleotide exchange rates and a fairly low GTP hydrolysis rate. Plays a role in control of the cell cycle, stress response, ribosome biogenesis and in those bacteria that undergo differentiation, in morphogenesis control. The chain is GTPase Obg from Vibrio parahaemolyticus serotype O3:K6 (strain RIMD 2210633).